The primary structure comprises 262 residues: Phosphatidylglycerol--prolipoprotein diacylglyceryl transferase (262 aa).

Helical transmembrane passes span 9–29 (LGPL…ILAV), 41–61 (IIPD…ILGA), 80–100 (IFAI…GALV), and 109–129 (LINT…AQSL). R131 contacts a 1,2-diacyl-sn-glycero-3-phospho-(1'-sn-glycerol). 3 helical membrane-spanning segments follow: residues 167–187 (QPTF…ILIF), 197–217 (GHIT…IEGM), and 226–246 (GLRV…MIVI).

This sequence belongs to the Lgt family.

It localises to the cell membrane. It catalyses the reaction L-cysteinyl-[prolipoprotein] + a 1,2-diacyl-sn-glycero-3-phospho-(1'-sn-glycerol) = an S-1,2-diacyl-sn-glyceryl-L-cysteinyl-[prolipoprotein] + sn-glycerol 1-phosphate + H(+). It functions in the pathway protein modification; lipoprotein biosynthesis (diacylglyceryl transfer). In terms of biological role, catalyzes the transfer of the diacylglyceryl group from phosphatidylglycerol to the sulfhydryl group of the N-terminal cysteine of a prolipoprotein, the first step in the formation of mature lipoproteins. In Streptococcus pneumoniae (strain P1031), this protein is Phosphatidylglycerol--prolipoprotein diacylglyceryl transferase.